Reading from the N-terminus, the 62-residue chain is Large ribosomal subunit protein bL32 (62 aa).

Residues methionine 1 to isoleucine 20 are disordered. The span at histidine 7–isoleucine 20 shows a compositional bias: basic residues.

It belongs to the bacterial ribosomal protein bL32 family.

This Lactobacillus acidophilus (strain ATCC 700396 / NCK56 / N2 / NCFM) protein is Large ribosomal subunit protein bL32.